The following is a 177-amino-acid chain: Cyclic pyranopterin monophosphate synthase (177 aa).

Substrate contacts are provided by residues 89–91 and 125–126; these read LCH and ME. Residue Asp140 is part of the active site.

It belongs to the MoaC family. Homohexamer; trimer of dimers.

It catalyses the reaction (8S)-3',8-cyclo-7,8-dihydroguanosine 5'-triphosphate = cyclic pyranopterin phosphate + diphosphate. It participates in cofactor biosynthesis; molybdopterin biosynthesis. In terms of biological role, catalyzes the conversion of (8S)-3',8-cyclo-7,8-dihydroguanosine 5'-triphosphate to cyclic pyranopterin monophosphate (cPMP). The protein is Cyclic pyranopterin monophosphate synthase of Streptomyces griseus subsp. griseus (strain JCM 4626 / CBS 651.72 / NBRC 13350 / KCC S-0626 / ISP 5235).